We begin with the raw amino-acid sequence, 225 residues long: Pre-mRNA-splicing factor SPF27 (225 aa).

A coiled-coil region spans residues 138-222 (SNDNLALMIE…QGDENKENIR (85 aa)).

It belongs to the SPF27 family. In terms of assembly, component of the pre-catalytic and catalytic spliceosome complexes. Component of the postcatalytic spliceosome P complex.

The protein resides in the nucleus. Required for pre-mRNA splicing as component of the activated spliceosome. May have a scaffolding role in the spliceosome assembly as it contacts all other components of the core complex. This is Pre-mRNA-splicing factor SPF27 (bcas2) from Danio rerio (Zebrafish).